A 372-amino-acid polypeptide reads, in one-letter code: Carbamoyl phosphate synthase small chain (372 aa).

A CPSase region spans residues 1-179 (MRAILALEDG…ALVTGKTLPP (179 aa)). Positions 45, 231, and 233 each coordinate L-glutamine. The 187-residue stretch at 183 to 369 (DIVAFDFGIK…RKMIAASKRQ (187 aa)) folds into the Glutamine amidotransferase type-1 domain. The active-site Nucleophile is the C258. Residues L259, Q262, N300, G302, and F303 each contribute to the L-glutamine site. Residues H342 and E344 contribute to the active site.

This sequence belongs to the CarA family. In terms of assembly, composed of two chains; the small (or glutamine) chain promotes the hydrolysis of glutamine to ammonia, which is used by the large (or ammonia) chain to synthesize carbamoyl phosphate. Tetramer of heterodimers (alpha,beta)4.

It carries out the reaction hydrogencarbonate + L-glutamine + 2 ATP + H2O = carbamoyl phosphate + L-glutamate + 2 ADP + phosphate + 2 H(+). The enzyme catalyses L-glutamine + H2O = L-glutamate + NH4(+). It participates in amino-acid biosynthesis; L-arginine biosynthesis; carbamoyl phosphate from bicarbonate: step 1/1. Its pathway is pyrimidine metabolism; UMP biosynthesis via de novo pathway; (S)-dihydroorotate from bicarbonate: step 1/3. In terms of biological role, small subunit of the glutamine-dependent carbamoyl phosphate synthetase (CPSase). CPSase catalyzes the formation of carbamoyl phosphate from the ammonia moiety of glutamine, carbonate, and phosphate donated by ATP, constituting the first step of 2 biosynthetic pathways, one leading to arginine and/or urea and the other to pyrimidine nucleotides. The small subunit (glutamine amidotransferase) binds and cleaves glutamine to supply the large subunit with the substrate ammonia. In Akkermansia muciniphila (strain ATCC BAA-835 / DSM 22959 / JCM 33894 / BCRC 81048 / CCUG 64013 / CIP 107961 / Muc), this protein is Carbamoyl phosphate synthase small chain.